The sequence spans 239 residues: Small ribosomal subunit protein uS2 (239 aa).

Belongs to the universal ribosomal protein uS2 family.

This Prochlorococcus marinus (strain MIT 9303) protein is Small ribosomal subunit protein uS2.